The primary structure comprises 741 residues: Phosphoribosylformylglycinamidine synthase subunit PurL (741 aa).

H53 is a catalytic residue. ATP contacts are provided by Y56 and K95. E97 lines the Mg(2+) pocket. Substrate contacts are provided by residues 98 to 101 and R120; that span reads SHNH. Residue H99 is the Proton acceptor of the active site. D121 is a Mg(2+) binding site. A substrate-binding site is contributed by Q244. D274 serves as a coordination point for Mg(2+). Residue 318-320 participates in substrate binding; that stretch reads ESQ. Residues D501 and G538 each contribute to the ATP site. Residue N539 coordinates Mg(2+). Residue S541 coordinates substrate.

Belongs to the FGAMS family. In terms of assembly, monomer. Part of the FGAM synthase complex composed of 1 PurL, 1 PurQ and 2 PurS subunits.

The protein localises to the cytoplasm. It carries out the reaction N(2)-formyl-N(1)-(5-phospho-beta-D-ribosyl)glycinamide + L-glutamine + ATP + H2O = 2-formamido-N(1)-(5-O-phospho-beta-D-ribosyl)acetamidine + L-glutamate + ADP + phosphate + H(+). Its pathway is purine metabolism; IMP biosynthesis via de novo pathway; 5-amino-1-(5-phospho-D-ribosyl)imidazole from N(2)-formyl-N(1)-(5-phospho-D-ribosyl)glycinamide: step 1/2. Its function is as follows. Part of the phosphoribosylformylglycinamidine synthase complex involved in the purines biosynthetic pathway. Catalyzes the ATP-dependent conversion of formylglycinamide ribonucleotide (FGAR) and glutamine to yield formylglycinamidine ribonucleotide (FGAM) and glutamate. The FGAM synthase complex is composed of three subunits. PurQ produces an ammonia molecule by converting glutamine to glutamate. PurL transfers the ammonia molecule to FGAR to form FGAM in an ATP-dependent manner. PurS interacts with PurQ and PurL and is thought to assist in the transfer of the ammonia molecule from PurQ to PurL. This chain is Phosphoribosylformylglycinamidine synthase subunit PurL, found in Limosilactobacillus fermentum (strain NBRC 3956 / LMG 18251) (Lactobacillus fermentum).